Here is a 293-residue protein sequence, read N- to C-terminus: Undecaprenyl-diphosphatase (293 aa).

The next 8 helical transmembrane spans lie at 3–23, 43–63, 85–105, 109–129, 178–198, 203–223, 238–258, and 269–289; these read IALALKAVILGIVEGLTEFLP, KGKIFEIVIQFGAILAVCWEF, ANVVIASVPAIVLAFIFGKWI, LFNPISVALAFIVGGVVILLA, FALVPGTSRSGATIIGGMLFG, VATEFSFFLAIPVIFGATVYE, IFAVGFVFAFLSAFLCVRWLL, and FAWYRIAFGIVVLLTAYSGLV.

This sequence belongs to the UppP family.

It is found in the cell inner membrane. The catalysed reaction is di-trans,octa-cis-undecaprenyl diphosphate + H2O = di-trans,octa-cis-undecaprenyl phosphate + phosphate + H(+). Its function is as follows. Catalyzes the dephosphorylation of undecaprenyl diphosphate (UPP). Confers resistance to bacitracin. This chain is Undecaprenyl-diphosphatase, found in Cupriavidus necator (strain ATCC 17699 / DSM 428 / KCTC 22496 / NCIMB 10442 / H16 / Stanier 337) (Ralstonia eutropha).